The sequence spans 200 residues: Ubiquinol-cytochrome-c reductase complex assembly factor 1 (200 aa).

Belongs to the CBP3 family.

It localises to the mitochondrion inner membrane. In terms of biological role, required for the assembly of the ubiquinol-cytochrome c reductase complex (mitochondrial respiratory chain complex III or cytochrome b-c1 complex). May be involved in cytochrome b translation and/or stability. The protein is Ubiquinol-cytochrome-c reductase complex assembly factor 1 (uqcc1) of Xenopus laevis (African clawed frog).